The sequence spans 363 residues: 3-isopropylmalate dehydrogenase (363 aa).

An NAD(+)-binding site is contributed by 78–91; that stretch reads GPKWENLPPESQPE. Substrate-binding residues include R99, R109, R138, and D227. Positions 227, 251, and 255 each coordinate Mg(2+). An NAD(+)-binding site is contributed by 285–297; sequence GSAPDIAGKNIAN.

Belongs to the isocitrate and isopropylmalate dehydrogenases family. LeuB type 1 subfamily. As to quaternary structure, homodimer. Mg(2+) serves as cofactor. It depends on Mn(2+) as a cofactor.

The protein resides in the cytoplasm. It catalyses the reaction (2R,3S)-3-isopropylmalate + NAD(+) = 4-methyl-2-oxopentanoate + CO2 + NADH. It functions in the pathway amino-acid biosynthesis; L-leucine biosynthesis; L-leucine from 3-methyl-2-oxobutanoate: step 3/4. In terms of biological role, catalyzes the oxidation of 3-carboxy-2-hydroxy-4-methylpentanoate (3-isopropylmalate) to 3-carboxy-4-methyl-2-oxopentanoate. The product decarboxylates to 4-methyl-2 oxopentanoate. This Salmonella choleraesuis (strain SC-B67) protein is 3-isopropylmalate dehydrogenase.